The following is an 887-amino-acid chain: Bifunctional uridylyltransferase/uridylyl-removing enzyme (887 aa).

Positions 1–337 are uridylyltransferase; sequence MINTSPLLNY…RLPNYERKIE (337 aa). A uridylyl-removing region spans residues 339–699; it reads VNDHFKIVDN…AHRKAAQDAV (361 aa). An HD domain is found at 457–579; it reads VDAHTLLLLR…LGDMEHLDYL (123 aa). 2 consecutive ACT domains span residues 700–782 and 809–887; these read QIFI…LMQR and MVEI…ICQH.

It belongs to the GlnD family. Mg(2+) is required as a cofactor.

The catalysed reaction is [protein-PII]-L-tyrosine + UTP = [protein-PII]-uridylyl-L-tyrosine + diphosphate. It catalyses the reaction [protein-PII]-uridylyl-L-tyrosine + H2O = [protein-PII]-L-tyrosine + UMP + H(+). With respect to regulation, uridylyltransferase (UTase) activity is inhibited by glutamine, while glutamine activates uridylyl-removing (UR) activity. Functionally, modifies, by uridylylation and deuridylylation, the PII regulatory proteins (GlnB and homologs), in response to the nitrogen status of the cell that GlnD senses through the glutamine level. Under low glutamine levels, catalyzes the conversion of the PII proteins and UTP to PII-UMP and PPi, while under higher glutamine levels, GlnD hydrolyzes PII-UMP to PII and UMP (deuridylylation). Thus, controls uridylylation state and activity of the PII proteins, and plays an important role in the regulation of nitrogen assimilation and metabolism. The polypeptide is Bifunctional uridylyltransferase/uridylyl-removing enzyme (Acinetobacter baumannii (strain ATCC 17978 / DSM 105126 / CIP 53.77 / LMG 1025 / NCDC KC755 / 5377)).